The chain runs to 979 residues: MHC class II regulatory factor RFX1 (979 aa).

Disordered regions lie at residues 1–136, 181–227, and 370–405; these read MATQ…QVVQ, QSAA…PTGT, and TSTG…STGG. A compositionally biased stretch (pro residues) spans 12–44; the sequence is APPPSQPPQAPPQAQPQPPPPPPPAAPQPPQPP. The segment covering 45-73 has biased composition (low complexity); sequence TAAATPQPQYVTELQSPQPQAQPPGGQKQ. Residue serine 60 is modified to Phosphoserine. Residues 81–96 are compositionally biased toward pro residues; the sequence is VPAPSQPTGAPTPSPA. Polar residues predominate over residues 114 to 126; it reads ETVSEASPGSTAS. Low complexity predominate over residues 127–136; it reads QTGVPTQVVQ. 2 stretches are compositionally biased toward polar residues: residues 190–203 and 209–220; these read GQVS…QQVH and SPVQANSSSSKT. Residues 370 to 379 show a composition bias toward low complexity; it reads TSTGAGASNS. Gly residues predominate over residues 380-405; the sequence is SGGGGSGGGGGGGGGGGGGGSGSTGG. The RFX-type winged-helix DNA-binding region spans 438–513; the sequence is TVQWLLDNYE…YHYYGLRIKA (76 aa). Residues 744–979 are necessary for dimerization; the sequence is FAQTLRRYTS…GLFVQALPSS (236 aa). Residues 915–960 are disordered; that stretch reads SLNPLDPDKDEEEEEEEESEDELPQDISLAAGGESPALGPETLEPP. The span at 922–938 shows a compositional bias: acidic residues; the sequence is DKDEEEEEEEESEDELP. Residues serine 978 and serine 979 each carry the phosphoserine modification.

The protein belongs to the RFX family. As to quaternary structure, homodimer; binds DNA as a homodimer. Heterodimer; heterodimerizes with RFX2 and RFX3.

It localises to the nucleus. Its function is as follows. Regulatory factor essential for MHC class II genes expression. Binds to the X boxes of MHC class II genes. Also binds to an inverted repeat (ENH1) required for hepatitis B virus genes expression and to the most upstream element (alpha) of the RPL30 promoter. In Homo sapiens (Human), this protein is MHC class II regulatory factor RFX1 (RFX1).